The following is a 790-amino-acid chain: MGTRKKVQAFVRVRPTDDFAHEMIKYGEDNKSIDIHLKKDTRRGVVNNQQTDWSFKLDGVLHNASQDLVYETVAKDAVSQALDGYNGTIMCYGQTGAGKTYTMTGATENYKHRGILPRALQQVFRMIEERPTHAITVRVSYLEIYNENLFDLLSTLPYVGPSVTPMTIVENPQGIFIKGLSVHLTSQEEDAFSLLFEGETNRIIASHTMNKNSSRSHCIFTIYMEAHSRTLSDEKYITSKINLVDLAGSERLSKTGSEGRVLKEATYINKSLSFLEQAIIALGDQNRDHVPFRQSKLTHALKDSLGGNCNMVLVTNIYGEAAQLDETLSSLRFASRMKLVTTEPAINEKYDAERMVKNLEKELALLKQELAIHDSLSNRTLVNYDPMDEIQIAEINSQVRRYLEGTLDEIDIINLRQIQEVFNQFRVVLSQQEQEVESALRRKYTLIDKNDFAAISAVQKVGLMDIEGNLVGEPDGQSFGLGVAPFSVKPGKKPKTKKTPKDQFSSSARKEGASSPVSGKDFDVASISKTQLIPSSKDGDLKDMLARERETSSIEPLISDSPKEELRAPRPSTPPSRTVAFEEFKNERGSEINRIFKENKSILNERKKRASETTQRINAIKQEIDETKDALNFQKSLREKQGEYENKGLMIIDEEEFLLILKLKDLKKQYRNEYQELRDLRAEIQYCQRLVDQCRHRLLMEFDIWYNESFMIPEDVQVALKLGSSIRPGMVPISRIVCLGEDDQDRFSHLQQTVLPEGLDSITFYNAKVKTDQKHNYMKTMVGLQQSHRK.

In terms of domain architecture, Kinesin motor spans 6 to 340; it reads KVQAFVRVRP…LRFASRMKLV (335 aa). ATP-binding positions include 12 to 14 and 93 to 100; these read RVR and GQTGAGKT. The stretch at 342 to 442 forms a coiled coil; the sequence is TEPAINEKYD…EQEVESALRR (101 aa). Residues 482–521 form a disordered region; the sequence is GVAPFSVKPGKKPKTKKTPKDQFSSSARKEGASSPVSGKD. At Thr-530 the chain carries Phosphothreonine. The disordered stretch occupies residues 547-577; that stretch reads RERETSSIEPLISDSPKEELRAPRPSTPPSR. The stretch at 600–695 forms a coiled coil; that stretch reads KSILNERKKR…YCQRLVDQCR (96 aa).

It belongs to the TRAFAC class myosin-kinesin ATPase superfamily. Kinesin family. In terms of assembly, interacts with HYDIN. As to expression, highly expressed in the testis (at protein level). Weakly expressed in the brain, thymus, lung and heart.

The protein localises to the cytoplasm. The protein resides in the cytoskeleton. It localises to the cell projection. It is found in the cilium. Its subcellular location is the flagellum. The protein localises to the flagellum axoneme. Essential for normal male fertility and for progressive motility of spermatozoa. This Mus musculus (Mouse) protein is Kinesin-like protein KIF9 (Kif9).